The primary structure comprises 209 residues: Ribonuclease HII (209 aa).

The 204-residue stretch at 6 to 209 (SLEAGIDEAG…IKRMTNSRLF (204 aa)) folds into the RNase H type-2 domain. 3 residues coordinate a divalent metal cation: D12, E13, and D108.

The protein belongs to the RNase HII family. Mn(2+) serves as cofactor. It depends on Mg(2+) as a cofactor.

It localises to the cytoplasm. It catalyses the reaction Endonucleolytic cleavage to 5'-phosphomonoester.. Endonuclease that specifically degrades the RNA of RNA-DNA hybrids. The chain is Ribonuclease HII from Caldivirga maquilingensis (strain ATCC 700844 / DSM 13496 / JCM 10307 / IC-167).